The primary structure comprises 507 residues: ATP synthase subunit alpha, chloroplastic (507 aa).

An ATP-binding site is contributed by 170–177; the sequence is GDRQTGKT.

The protein belongs to the ATPase alpha/beta chains family. F-type ATPases have 2 components, CF(1) - the catalytic core - and CF(0) - the membrane proton channel. CF(1) has five subunits: alpha(3), beta(3), gamma(1), delta(1), epsilon(1). CF(0) has four main subunits: a, b, b' and c.

The protein localises to the plastid. The protein resides in the chloroplast thylakoid membrane. It catalyses the reaction ATP + H2O + 4 H(+)(in) = ADP + phosphate + 5 H(+)(out). Produces ATP from ADP in the presence of a proton gradient across the membrane. The alpha chain is a regulatory subunit. The sequence is that of ATP synthase subunit alpha, chloroplastic from Lemna minor (Common duckweed).